The following is a 229-amino-acid chain: Ribonuclease 3 (229 aa).

One can recognise an RNase III domain in the interval 5-127 (LDRLERKLGY…LIGAIYLDTG (123 aa)). Glu40 contributes to the Mg(2+) binding site. Residue Asp44 is part of the active site. Positions 113 and 116 each coordinate Mg(2+). Glu116 is a catalytic residue. The 71-residue stretch at 154-224 (DPKTRLQEFL…AAAALVALGV (71 aa)) folds into the DRBM domain.

This sequence belongs to the ribonuclease III family. As to quaternary structure, homodimer. The cofactor is Mg(2+).

It is found in the cytoplasm. The catalysed reaction is Endonucleolytic cleavage to 5'-phosphomonoester.. Its function is as follows. Digests double-stranded RNA. Involved in the processing of primary rRNA transcript to yield the immediate precursors to the large and small rRNAs (23S and 16S). Processes some mRNAs, and tRNAs when they are encoded in the rRNA operon. Processes pre-crRNA and tracrRNA of type II CRISPR loci if present in the organism. This Pseudomonas paraeruginosa (strain DSM 24068 / PA7) (Pseudomonas aeruginosa (strain PA7)) protein is Ribonuclease 3.